Consider the following 445-residue polypeptide: Phosphoglucosamine mutase (445 aa).

The active-site Phosphoserine intermediate is the Ser102. Mg(2+) contacts are provided by Ser102, Asp241, Asp243, and Asp245. Position 102 is a phosphoserine (Ser102).

This sequence belongs to the phosphohexose mutase family. Requires Mg(2+) as cofactor. Activated by phosphorylation.

It catalyses the reaction alpha-D-glucosamine 1-phosphate = D-glucosamine 6-phosphate. Catalyzes the conversion of glucosamine-6-phosphate to glucosamine-1-phosphate. The protein is Phosphoglucosamine mutase of Aliivibrio fischeri (strain MJ11) (Vibrio fischeri).